We begin with the raw amino-acid sequence, 713 residues long: Polyribonucleotide nucleotidyltransferase (713 aa).

Positions 485 and 491 each coordinate Mg(2+). The KH domain occupies 552–611; sequence PRIYTMKIDPKKIKDVIGKGGATVRSLTEETGTSIDIDDDGTVKIAAVDKNAVQEVMSRI. The region spanning 621–689 is the S1 motif domain; it reads GVVYKGKVTR…RQGRIRLTMK (69 aa). Positions 694–713 are disordered; the sequence is DQTKNEENLLQSEEGSPVQE. Polar residues predominate over residues 701–713; sequence NLLQSEEGSPVQE.

Belongs to the polyribonucleotide nucleotidyltransferase family. Component of the RNA degradosome, which is a multiprotein complex involved in RNA processing and mRNA degradation. It depends on Mg(2+) as a cofactor.

The protein resides in the cytoplasm. It carries out the reaction RNA(n+1) + phosphate = RNA(n) + a ribonucleoside 5'-diphosphate. Its function is as follows. Involved in mRNA degradation. Catalyzes the phosphorolysis of single-stranded polyribonucleotides processively in the 3'- to 5'-direction. The polypeptide is Polyribonucleotide nucleotidyltransferase (Histophilus somni (strain 2336) (Haemophilus somnus)).